A 503-amino-acid polypeptide reads, in one-letter code: MVIGLSTMLEKTEALFASDHASVVSMNLFVALLCACIVLGHLLEETRWMNESITALIIGSCTGIVILLISGGKSSRILVFSEDLFFIYLLPPIIFNAGFQVKKKQFFRNFMTIMLFGAIGTLISFVIISFGAKHLFEKMNIGDLTIADYLAIGAIFSATDSVCTLQVLNQDETPLLYSLVFGEGVVNDATSVVLFNAIQRFDLTNINSAIALEFAGNFFYLFILSTALGVAAGLLSAFVIKKLYIGRHSTDREVALMMLLAYLSYMLAELFHLSSILTVFFCGIVMSHYTWHNVTDKSKVTTKHTFAAMSFLAEIFIFLYVGMDALDIEKWDVVRNSPGQSIGVSSILLGLILLGRAAFVFPLSFLSNLTKSSPDEKIDLKKQVTIWWAGLMRGAVSMALAYNQFTTSGHTKVLGNAIMITSTITVVLFSTVVFGLLTKPLVKHLQPSSKQSSTTALQITLRSSFHDPILHEPLLSTQGQSEYDPEQHVSFRMFWKSPSRFTH.

Over 1 to 22 the chain is Cytoplasmic; the sequence is MVIGLSTMLEKTEALFASDHAS. A helical membrane pass occupies residues 23–43; the sequence is VVSMNLFVALLCACIVLGHLL. Over 44–51 the chain is Vacuolar; the sequence is EETRWMNE. N-linked (GlcNAc...) asparagine glycosylation is present at asparagine 50. The chain crosses the membrane as a helical span at residues 52–72; the sequence is SITALIIGSCTGIVILLISGG. Topologically, residues 73-76 are cytoplasmic; that stretch reads KSSR. Positions 77-97 form an intramembrane region, helical; sequence ILVFSEDLFFIYLLPPIIFNA. Topologically, residues 98–109 are cytoplasmic; it reads GFQVKKKQFFRN. Residues 110–130 traverse the membrane as a helical segment; it reads FMTIMLFGAIGTLISFVIISF. The Vacuolar portion of the chain corresponds to 131-138; it reads GAKHLFEK. A helical membrane pass occupies residues 139 to 159; sequence MNIGDLTIADYLAIGAIFSAT. Residues 160 to 174 lie on the Cytoplasmic side of the membrane; it reads DSVCTLQVLNQDETP. Residues 175–195 traverse the membrane as a helical segment; it reads LLYSLVFGEGVVNDATSVVLF. Over 196–219 the chain is Vacuolar; the sequence is NAIQRFDLTNINSAIALEFAGNFF. Residues 220–240 traverse the membrane as a helical segment; that stretch reads YLFILSTALGVAAGLLSAFVI. Topologically, residues 241–265 are cytoplasmic; the sequence is KKLYIGRHSTDREVALMMLLAYLSY. The helical transmembrane segment at 266–286 threads the bilayer; sequence MLAELFHLSSILTVFFCGIVM. Residues 287–305 lie on the Vacuolar side of the membrane; it reads SHYTWHNVTDKSKVTTKHT. N-linked (GlcNAc...) asparagine glycosylation is present at asparagine 293. A helical transmembrane segment spans residues 306-326; sequence FAAMSFLAEIFIFLYVGMDAL. Topologically, residues 327-345 are cytoplasmic; sequence DIEKWDVVRNSPGQSIGVS. Residues 346-366 form a helical membrane-spanning segment; it reads SILLGLILLGRAAFVFPLSFL. At 367–383 the chain is on the vacuolar side; it reads SNLTKSSPDEKIDLKKQ. Asparagine 368 carries N-linked (GlcNAc...) asparagine glycosylation. The chain crosses the membrane as a helical span at residues 384 to 406; that stretch reads VTIWWAGLMRGAVSMALAYNQFT. At 407-416 the chain is on the cytoplasmic side; it reads TSGHTKVLGN. Residues 417–437 form a helical membrane-spanning segment; sequence AIMITSTITVVLFSTVVFGLL. The Vacuolar portion of the chain corresponds to 438–503; the sequence is TKPLVKHLQP…FWKSPSRFTH (66 aa).

It belongs to the monovalent cation:proton antiporter 1 (CPA1) transporter (TC 2.A.36) family. Expressed in roots.

The protein resides in the vacuole membrane. It catalyses the reaction Na(+)(in) + H(+)(out) = Na(+)(out) + H(+)(in). It carries out the reaction K(+)(in) + H(+)(out) = K(+)(out) + H(+)(in). Functionally, may act in low affinity electroneutral exchange of protons for cations such as Na(+) or K(+) across membranes. May also exchange Li(+) and Cs(+) with a lower affinity. This Arabidopsis thaliana (Mouse-ear cress) protein is Sodium/hydrogen exchanger 3 (NHX3).